Here is a 101-residue protein sequence, read N- to C-terminus: Small ribosomal subunit protein bS18c (101 aa).

This sequence belongs to the bacterial ribosomal protein bS18 family. In terms of assembly, part of the 30S ribosomal subunit.

It localises to the plastid. It is found in the chloroplast. This Solanum bulbocastanum (Wild potato) protein is Small ribosomal subunit protein bS18c.